The chain runs to 662 residues: Bifunctional polymyxin resistance protein ArnA (662 aa).

Residues 1–307 (MTSKAVVFAY…ELGLVEGARL (307 aa)) are formyltransferase ArnAFT. The Proton donor; for formyltransferase activity role is filled by H106. Residues R116 and 138–142 (IERAD) contribute to the (6R)-10-formyltetrahydrofolate site. Residues 316–662 (RRTRVLILGV…EALREREAQA (347 aa)) are dehydrogenase ArnADH. Residues D349 and 370 to 371 (DI) each bind NAD(+). Residues A395, Y400, and 434–435 (TS) each bind UDP-alpha-D-glucuronate. Residue E436 is the Proton acceptor; for decarboxylase activity of the active site. Residues R462, N493, 527–536 (RLVDGGAQKR), and Y614 contribute to the UDP-alpha-D-glucuronate site. Catalysis depends on R620, which acts as the Proton donor; for decarboxylase activity.

In the N-terminal section; belongs to the Fmt family. UDP-L-Ara4N formyltransferase subfamily. The protein in the C-terminal section; belongs to the NAD(P)-dependent epimerase/dehydratase family. UDP-glucuronic acid decarboxylase subfamily. As to quaternary structure, homohexamer, formed by a dimer of trimers.

The catalysed reaction is UDP-alpha-D-glucuronate + NAD(+) = UDP-beta-L-threo-pentopyranos-4-ulose + CO2 + NADH. The enzyme catalyses UDP-4-amino-4-deoxy-beta-L-arabinose + (6R)-10-formyltetrahydrofolate = UDP-4-deoxy-4-formamido-beta-L-arabinose + (6S)-5,6,7,8-tetrahydrofolate + H(+). Its pathway is nucleotide-sugar biosynthesis; UDP-4-deoxy-4-formamido-beta-L-arabinose biosynthesis; UDP-4-deoxy-4-formamido-beta-L-arabinose from UDP-alpha-D-glucuronate: step 1/3. It functions in the pathway nucleotide-sugar biosynthesis; UDP-4-deoxy-4-formamido-beta-L-arabinose biosynthesis; UDP-4-deoxy-4-formamido-beta-L-arabinose from UDP-alpha-D-glucuronate: step 3/3. The protein operates within bacterial outer membrane biogenesis; lipopolysaccharide biosynthesis. In terms of biological role, bifunctional enzyme that catalyzes the oxidative decarboxylation of UDP-glucuronic acid (UDP-GlcUA) to UDP-4-keto-arabinose (UDP-Ara4O) and the addition of a formyl group to UDP-4-amino-4-deoxy-L-arabinose (UDP-L-Ara4N) to form UDP-L-4-formamido-arabinose (UDP-L-Ara4FN). The modified arabinose is attached to lipid A and is required for resistance to polymyxin and cationic antimicrobial peptides. In Pseudomonas aeruginosa (strain LESB58), this protein is Bifunctional polymyxin resistance protein ArnA.